The chain runs to 259 residues: Thiazole synthase (259 aa).

The Schiff-base intermediate with DXP role is filled by Lys-98. 1-deoxy-D-xylulose 5-phosphate-binding positions include Gly-159, 185–186, and 207–208; these read AG and NS.

Belongs to the ThiG family. As to quaternary structure, homotetramer. Forms heterodimers with either ThiH or ThiS.

The protein localises to the cytoplasm. It catalyses the reaction [ThiS sulfur-carrier protein]-C-terminal-Gly-aminoethanethioate + 2-iminoacetate + 1-deoxy-D-xylulose 5-phosphate = [ThiS sulfur-carrier protein]-C-terminal Gly-Gly + 2-[(2R,5Z)-2-carboxy-4-methylthiazol-5(2H)-ylidene]ethyl phosphate + 2 H2O + H(+). The protein operates within cofactor biosynthesis; thiamine diphosphate biosynthesis. Its function is as follows. Catalyzes the rearrangement of 1-deoxy-D-xylulose 5-phosphate (DXP) to produce the thiazole phosphate moiety of thiamine. Sulfur is provided by the thiocarboxylate moiety of the carrier protein ThiS. In vitro, sulfur can be provided by H(2)S. The protein is Thiazole synthase of Chlorobium limicola (strain DSM 245 / NBRC 103803 / 6330).